The sequence spans 843 residues: Beta-mannosidase B (843 aa).

Residue Glu-432 is the Proton donor of the active site.

The protein belongs to the glycosyl hydrolase 2 family. Beta-mannosidase B subfamily.

It catalyses the reaction Hydrolysis of terminal, non-reducing beta-D-mannose residues in beta-D-mannosides.. Its pathway is glycan metabolism; N-glycan degradation. Its function is as follows. Exoglycosidase that cleaves the single beta-linked mannose residue from the non-reducing end of beta-mannosidic oligosaccharides of various complexity and length. Prefers mannobiose over mannotriose and has no activity against polymeric mannan. Is also severely restricted by galactosyl substitutions at the +1 subsite. Releases the terminal mannose residue from mannobiose, mannotriose and galactosyl-mannotriose (GM3), but not from galactosyl-mannobiose (GM2) or di-galactosyl-mannopentaose (G2M5). The polypeptide is Beta-mannosidase B (mndB) (Emericella nidulans (strain FGSC A4 / ATCC 38163 / CBS 112.46 / NRRL 194 / M139) (Aspergillus nidulans)).